Here is a 619-residue protein sequence, read N- to C-terminus: Kininogen-2 (619 aa).

The first 18 residues, 1–18 (MKLITILFLCSRLLPSLT), serve as a signal peptide directing secretion. The residue at position 19 (Gln-19) is a Pyrrolidone carboxylic acid. Positions 27–131 (CNDQDVFKAV…IQTCLITPAE (105 aa)) constitute a Cystatin kininogen-type 1 domain. 9 cysteine pairs are disulfide-bonded: Cys-27–Cys-589, Cys-82–Cys-93, Cys-106–Cys-125, Cys-141–Cys-144, Cys-205–Cys-217, Cys-228–Cys-247, Cys-261–Cys-264, Cys-325–Cys-337, and Cys-348–Cys-367. Asn-87 is a glycosylation site (N-linked (GlcNAc...) asparagine). Thr-136 carries O-linked (GalNAc...) threonine; partial glycosylation. The region spanning 150 to 253 (TKSPDLEPVL…SQKCDLYPGE (104 aa)) is the Cystatin kininogen-type 2 domain. Residues Asn-168 and Asn-169 are each glycosylated (N-linked (GlcNAc...) asparagine). An N-linked (GlcNAc...) asparagine; partial glycan is attached at Asn-197. N-linked (GlcNAc...) asparagine glycosylation is present at Asn-204. One can recognise a Cystatin kininogen-type 3 domain in the interval 270–373 (VDSPDLEEAL…TVNCQPLGQT (104 aa)). N-linked (GlcNAc...) asparagine glycosylation is present at Asn-280. At Pro-380 the chain carries 4-hydroxyproline. The interval 394-495 (EGSTTVSLPH…GKNNGKHYDW (102 aa)) is disordered. The O-linked (GalNAc...) serine glycan is linked to Ser-396. Thr-397 and Thr-398 each carry an O-linked (GalNAc...) threonine glycan. Ser-400 and Ser-404 each carry an O-linked (GalNAc...) serine glycan. Residues 442–490 (GHKHKHDQGHGHHRSHGLGHGHQKQHGLGHGHKHGHGHGKHKNKGKNNG) are compositionally biased toward basic residues. Ser-510 carries an O-linked (GalNAc...) serine glycan. Thr-518, Thr-522, Thr-534, Thr-546, Thr-551, and Thr-568 each carry an O-linked (GalNAc...) threonine glycan.

Bradykinin is released from kininogen by plasma kallikrein. As to expression, plasma.

It localises to the secreted. The protein localises to the extracellular space. Functionally, (1) Kininogens are inhibitors of thiol proteases; (2) HMW-kininogen plays an important role in blood coagulation by helping to position optimally prekallikrein and factor XI next to factor XII; (3) HMW-kininogen inhibits the thrombin- and plasmin-induced aggregation of thrombocytes; (4) the active peptide bradykinin that is released from HMW-kininogen shows a variety of physiological effects: (4A) influence in smooth muscle contraction, (4B) induction of hypotension, (4C) natriuresis and diuresis, (4D) decrease in blood glucose level, (4E) it is a mediator of inflammation and causes (4E1) increase in vascular permeability, (4E2) stimulation of nociceptors (4E3) release of other mediators of inflammation (e.g. prostaglandins), (4F) it has a cardioprotective effect (directly via bradykinin action, indirectly via endothelium-derived relaxing factor action); (5) LMW-kininogen inhibits the aggregation of thrombocytes; (6) LMW-kininogen is in contrast to HMW-kininogen not involved in blood clotting. In Bos taurus (Bovine), this protein is Kininogen-2 (KNG2).